The following is a 77-amino-acid chain: Acyl carrier protein (77 aa).

The Carrier domain maps to 2–77 (SEKLQKIQAL…DAVAYIEERS (76 aa)). S37 is modified (O-(pantetheine 4'-phosphoryl)serine).

It belongs to the acyl carrier protein (ACP) family. Post-translationally, 4'-phosphopantetheine is transferred from CoA to a specific serine of apo-ACP by AcpS. This modification is essential for activity because fatty acids are bound in thioester linkage to the sulfhydryl of the prosthetic group.

Its subcellular location is the cytoplasm. It functions in the pathway lipid metabolism; fatty acid biosynthesis. Its function is as follows. Carrier of the growing fatty acid chain in fatty acid biosynthesis. This Desulforudis audaxviator (strain MP104C) protein is Acyl carrier protein.